A 92-amino-acid chain; its full sequence is Large ribosomal subunit protein bL25 (92 aa).

Belongs to the bacterial ribosomal protein bL25 family. In terms of assembly, part of the 50S ribosomal subunit; part of the 5S rRNA/L5/L18/L25 subcomplex. Contacts the 5S rRNA. Binds to the 5S rRNA independently of L5 and L18.

In terms of biological role, this is one of the proteins that binds to the 5S RNA in the ribosome where it forms part of the central protuberance. In Vibrio campbellii (strain ATCC BAA-1116), this protein is Large ribosomal subunit protein bL25.